The primary structure comprises 302 residues: Flavin-dependent thymidylate synthase (302 aa).

Positions glycine 43–tyrosine 257 constitute a ThyX domain. Residues threonine 89, arginine 112–arginine 114, and glutamate 120 contribute to the FAD site. Residues glutamine 109–arginine 112, glutamate 120–arginine 124, and arginine 196 contribute to the dUMP site. Residues arginine 112–serine 122 carry the ThyX motif motif. FAD is bound by residues aspartate 212–histidine 214 and histidine 218. Position 223 (arginine 223) interacts with dUMP. Arginine 223 acts as the Involved in ionization of N3 of dUMP, leading to its activation in catalysis.

It belongs to the thymidylate synthase ThyX family. Homotetramer. Requires FAD as cofactor.

The enzyme catalyses dUMP + (6R)-5,10-methylene-5,6,7,8-tetrahydrofolate + NADPH + H(+) = dTMP + (6S)-5,6,7,8-tetrahydrofolate + NADP(+). The protein operates within pyrimidine metabolism; dTTP biosynthesis. In terms of biological role, catalyzes the reductive methylation of 2'-deoxyuridine-5'-monophosphate (dUMP) to 2'-deoxythymidine-5'-monophosphate (dTMP) while utilizing 5,10-methylenetetrahydrofolate (mTHF) as the methyl donor, and NADPH and FADH(2) as the reductant. The protein is Flavin-dependent thymidylate synthase of Ruegeria pomeroyi (strain ATCC 700808 / DSM 15171 / DSS-3) (Silicibacter pomeroyi).